The sequence spans 169 residues: Type II secretion system protein H (169 aa).

A propeptide spans 1-29 (MRVARLPLLHPHRAAPVVRRQLRGSSLLE) (leader sequence). Met-30 carries the N-methylmethionine modification. A helical transmembrane segment spans residues 32 to 52 (LVIALIALAGVLAAAALTGGI).

The protein belongs to the GSP H family. As to quaternary structure, type II secretion is composed of four main components: the outer membrane complex, the inner membrane complex, the cytoplasmic secretion ATPase and the periplasm-spanning pseudopilus. Interacts with core component XpsG. Interacts with minor pseudopilins XpsI and XpsJ. In terms of processing, cleaved by prepilin peptidase. Post-translationally, methylated by prepilin peptidase at the amino group of the N-terminal phenylalanine once the leader sequence is cleaved by prepilin peptidase.

Its subcellular location is the cell inner membrane. Its function is as follows. Component of the type II secretion system required for the energy-dependent secretion of extracellular factors such as proteases and toxins from the periplasm. Part of the pseudopilus tip complex that is critical for the recognition and binding of secretion substrates. The polypeptide is Type II secretion system protein H (xpsH) (Xanthomonas campestris pv. campestris (strain ATCC 33913 / DSM 3586 / NCPPB 528 / LMG 568 / P 25)).